A 733-amino-acid chain; its full sequence is Forkhead box protein K1 (733 aa).

The residue at position 2 (Ala-2) is an N-acetylalanine. The tract at residues 2-40 (AEVGEDSGARALLALRSAPCSPVLCAAAAAAAFPAAAPP) is interaction with SIN3A and SIN3B. A disordered region spans residues 36–79 (AAAPPPAPAQPQPPPGPPPPPPPPLPPGAIAGAGSSGGSSGVSG). A compositionally biased stretch (pro residues) spans 37 to 62 (AAPPPAPAQPQPPPGPPPPPPPPLPP). A required for interaction with FOXO4 and MEF2C region spans residues 95–420 (AASVRQSPGP…PLSSRSAPAS (326 aa)). Phosphoserine is present on Ser-101. The region spanning 123–175 (VTIGRNSSQGSVDLSMGLSSFISRRHLQLSFQEPHFYLRCLGKNGVFVDGAFQ) is the FHA domain. 2 positions are modified to omega-N-methylarginine: Arg-161 and Arg-191. Phosphoserine is present on residues Ser-213, Ser-223, Ser-239, and Ser-243. Phosphothreonine occurs at positions 245 and 247. Residues Ser-253, Ser-257, Ser-295, and Ser-299 each carry the phosphoserine modification. Disordered stretches follow at residues 287–306 (ASEQQADTSGGDSPKDESKP) and 413–436 (SSRSAPASPTHPGLMSPRSGGLQT). A DNA-binding region (fork-head) is located at residues 305-400 (KPPFSYAQLI…EQAFRKRRQR (96 aa)). Phosphoserine occurs at positions 416 and 420. Thr-422 is subject to Phosphothreonine. A Phosphoserine modification is found at Ser-428. Residue Thr-436 is modified to Phosphothreonine. Ser-441, Ser-445, and Ser-459 each carry phosphoserine. A compositionally biased stretch (low complexity) spans 676 to 697 (VAATATTTPATATTASASASST). The tract at residues 676 to 733 (VAATATTTPATATTASASASSTGEPEVKRSRVEEPSGAVTTPAGVIAAAGPQGPGTGE) is disordered. Residues 700 to 709 (PEVKRSRVEE) show a composition bias toward basic and acidic residues.

As to quaternary structure, interacts with SIN3A and SIN3B (via PAH2) to form a complex which represses transcription. Component of SIN3A-, but not SIN3B-, containing multiprotein complexes. Interacts with FOXO4 and MEF2C; both interactions inhibit FOXO4 and MEF2C transactivation activity. Interacts (when phosphorylated) with YWHAE/14-3-3-epsilon; promotes sequestration in the cytoplasm and leads to impaired ability to bind DNA. Interacts with FHL2. Interacts with SRF. Interacts with DVL2 and DVL3; the interaction induces DVL2 nuclear translocation. Interacts with BAP1 (when phosphorylated). Accessory component of the polycomb repressive deubiquitinase (PR-DUB) complex, at least composed of BAP1, one of ASXL1, ASXL2 or (probably) ASXL3 and one of MBD5 or MBD6. The PR-DUB core associates with a number of accessory proteins, including FOXK1, FOXK2, KDM1B, HCFC1 and OGT. In terms of processing, phosphorylation by GSK3 (GSK3A or GSK3B) promotes interaction with YWHAE/14-3-3-epsilon and retention in the cytoplasm. In response to mTORC1 signaling, phosphorylation by GSK3 is prevented, leading to translocation to the nucleus. As to expression, expressed both developing and adult tissues. In adults, significant expression is seen in tumors of the brain, colon and lymph node.

The protein localises to the nucleus. It localises to the cytoplasm. Functionally, transcriptional regulator involved in different processes such as glucose metabolism, aerobic glycolysis, muscle cell differentiation and autophagy. Recognizes and binds the forkhead DNA sequence motif (5'-GTAAACA-3') and can both act as a transcription activator or repressor, depending on the context. Together with FOXK2, acts as a key regulator of metabolic reprogramming towards aerobic glycolysis, a process in which glucose is converted to lactate in the presence of oxygen. Acts by promoting expression of enzymes for glycolysis (such as hexokinase-2 (HK2), phosphofructokinase, pyruvate kinase (PKLR) and lactate dehydrogenase), while suppressing further oxidation of pyruvate in the mitochondria by up-regulating pyruvate dehydrogenase kinases PDK1 and PDK4. Probably plays a role in gluconeogenesis during overnight fasting, when lactate from white adipose tissue and muscle is the main substrate. Involved in mTORC1-mediated metabolic reprogramming: in response to mTORC1 signaling, translocates into the nucleus and regulates the expression of genes associated with glycolysis and downstream anabolic pathways, such as HIF1A, thereby regulating glucose metabolism. Together with FOXK2, acts as a negative regulator of autophagy in skeletal muscle: in response to starvation, enters the nucleus, binds the promoters of autophagy genes and represses their expression, preventing proteolysis of skeletal muscle proteins. Acts as a transcriptional regulator of the myogenic progenitor cell population in skeletal muscle. Binds to the upstream enhancer region (CCAC box) of myoglobin (MB) gene, regulating the myogenic progenitor cell population. Promotes muscle progenitor cell proliferation by repressing the transcriptional activity of FOXO4, thereby inhibiting myogenic differentiation. Involved in remodeling processes of adult muscles that occur in response to physiological stimuli. Required to correct temporal orchestration of molecular and cellular events necessary for muscle repair. Represses myogenic differentiation by inhibiting MEFC activity. Positively regulates Wnt/beta-catenin signaling by translocating DVL into the nucleus. Reduces virus replication, probably by binding the interferon stimulated response element (ISRE) to promote antiviral gene expression. Accessory component of the polycomb repressive deubiquitinase (PR-DUB) complex; recruits the PR-DUB complex to specific FOXK1-bound genes. The polypeptide is Forkhead box protein K1 (Homo sapiens (Human)).